A 222-amino-acid chain; its full sequence is MSLTKRLLHIHPRCSFSKRSHPSADRNSQPISEALLSQVDKTTENLQLLEIASGSGQHAGFLAPLLPNITFQPTEYERNQFGSIAAYAGDCPTRNIRPPFHVDITRDPGDWEAPPAPASYDYMFNSNMMHISPWSCSIGLFRAAGQLLKKGGRMFTYGPYAQDGILVPQSNVDFDRSLRQRDASWGVRDIKDLKVLAAENGLQLEKLVKMPSNNKFLTWLKL.

Belongs to the UPF0585 family.

In Drosophila melanogaster (Fruit fly), this protein is UPF0585 protein CG18661.